A 303-amino-acid chain; its full sequence is Methionyl-tRNA formyltransferase (303 aa).

(6S)-5,6,7,8-tetrahydrofolate is bound at residue 108–111; it reads SDLP.

It belongs to the Fmt family.

It carries out the reaction L-methionyl-tRNA(fMet) + (6R)-10-formyltetrahydrofolate = N-formyl-L-methionyl-tRNA(fMet) + (6S)-5,6,7,8-tetrahydrofolate + H(+). Functionally, attaches a formyl group to the free amino group of methionyl-tRNA(fMet). The formyl group appears to play a dual role in the initiator identity of N-formylmethionyl-tRNA by promoting its recognition by IF2 and preventing the misappropriation of this tRNA by the elongation apparatus. The protein is Methionyl-tRNA formyltransferase of Rickettsia peacockii (strain Rustic).